A 255-amino-acid polypeptide reads, in one-letter code: Taurine import ATP-binding protein TauB (255 aa).

The ABC transporter domain occupies leucine 2–alanine 229. Glycine 34 to threonine 41 provides a ligand contact to ATP.

Belongs to the ABC transporter superfamily. Taurine importer (TC 3.A.1.17.1) family. In terms of assembly, the complex is composed of two ATP-binding proteins (TauB), two transmembrane proteins (TauC) and a solute-binding protein (TauA).

It is found in the cell inner membrane. The enzyme catalyses taurine(out) + ATP + H2O = taurine(in) + ADP + phosphate + H(+). Its function is as follows. Part of the ABC transporter complex TauABC involved in taurine import. Responsible for energy coupling to the transport system. The chain is Taurine import ATP-binding protein TauB from Yersinia pseudotuberculosis serotype I (strain IP32953).